The sequence spans 316 residues: NADH-quinone oxidoreductase subunit H (316 aa).

8 consecutive transmembrane segments (helical) span residues 6–26, 74–94, 98–118, 145–165, 177–197, 233–253, 256–276, and 296–316; these read PAVV…LIWV, FVIA…VVPF, VGVI…SLAV, ISYE…AGSF, GWYV…AVAE, YLGI…GWLG, FLPP…FFIL, and VMLP…LSVP.

It belongs to the complex I subunit 1 family. NDH-1 is composed of 14 different subunits. Subunits NuoA, H, J, K, L, M, N constitute the membrane sector of the complex.

The protein localises to the cell inner membrane. The catalysed reaction is a quinone + NADH + 5 H(+)(in) = a quinol + NAD(+) + 4 H(+)(out). Its function is as follows. NDH-1 shuttles electrons from NADH, via FMN and iron-sulfur (Fe-S) centers, to quinones in the respiratory chain. The immediate electron acceptor for the enzyme in this species is believed to be ubiquinone. Couples the redox reaction to proton translocation (for every two electrons transferred, four hydrogen ions are translocated across the cytoplasmic membrane), and thus conserves the redox energy in a proton gradient. This subunit may bind ubiquinone. The chain is NADH-quinone oxidoreductase subunit H from Methylococcus capsulatus (strain ATCC 33009 / NCIMB 11132 / Bath).